The following is a 448-amino-acid chain: tRNA wybutosine-synthesizing protein 2 homolog (448 aa).

S-adenosyl-L-methionine contacts are provided by residues Ser218, Lys225, Glu265, and 293-294 (DN).

The protein belongs to the class I-like SAM-binding methyltransferase superfamily. TRM5/TYW2 family.

It catalyses the reaction 4-demethylwyosine(37) in tRNA(Phe) + S-adenosyl-L-methionine = 4-demethyl-7-[(3S)-3-amino-3-carboxypropyl]wyosine(37) in tRNA(Phe) + S-methyl-5'-thioadenosine + H(+). It functions in the pathway tRNA modification; wybutosine-tRNA(Phe) biosynthesis. Functionally, S-adenosyl-L-methionine-dependent transferase that acts as a component of the wybutosine biosynthesis pathway. Wybutosine is a hyper modified guanosine with a tricyclic base found at the 3'-position adjacent to the anticodon of eukaryotic phenylalanine tRNA. Catalyzes the transfer of the alpha-amino-alpha-carboxypropyl (acp) group from S-adenosyl-L-methionine to the C-7 position of 4-demethylwyosine (imG-14) to produce wybutosine-86. In Macaca fascicularis (Crab-eating macaque), this protein is tRNA wybutosine-synthesizing protein 2 homolog (TRMT12).